The following is a 427-amino-acid chain: 3-phosphoshikimate 1-carboxyvinyltransferase (427 aa).

The 3-phosphoshikimate site is built by K23, S24, and R28. K23 is a binding site for phosphoenolpyruvate. The phosphoenolpyruvate site is built by G97 and R125. The 3-phosphoshikimate site is built by S170, S171, Q172, S198, D314, N337, and K341. Q172 serves as a coordination point for phosphoenolpyruvate. Residue D314 is the Proton acceptor of the active site. Phosphoenolpyruvate-binding residues include R345, R387, and K412.

Belongs to the EPSP synthase family. As to quaternary structure, monomer.

It localises to the cytoplasm. It carries out the reaction 3-phosphoshikimate + phosphoenolpyruvate = 5-O-(1-carboxyvinyl)-3-phosphoshikimate + phosphate. Its pathway is metabolic intermediate biosynthesis; chorismate biosynthesis; chorismate from D-erythrose 4-phosphate and phosphoenolpyruvate: step 6/7. Catalyzes the transfer of the enolpyruvyl moiety of phosphoenolpyruvate (PEP) to the 5-hydroxyl of shikimate-3-phosphate (S3P) to produce enolpyruvyl shikimate-3-phosphate and inorganic phosphate. The chain is 3-phosphoshikimate 1-carboxyvinyltransferase from Buchnera aphidicola subsp. Acyrthosiphon pisum (strain Tuc7).